A 102-amino-acid chain; its full sequence is Urease subunit beta (102 aa).

This sequence belongs to the urease beta subunit family. In terms of assembly, heterotrimer of UreA (gamma), UreB (beta) and UreC (alpha) subunits. Three heterotrimers associate to form the active enzyme.

The protein resides in the cytoplasm. It catalyses the reaction urea + 2 H2O + H(+) = hydrogencarbonate + 2 NH4(+). The protein operates within nitrogen metabolism; urea degradation; CO(2) and NH(3) from urea (urease route): step 1/1. This is Urease subunit beta from Pseudomonas syringae pv. tomato (strain ATCC BAA-871 / DC3000).